Here is a 350-residue protein sequence, read N- to C-terminus: Biotin synthase (350 aa).

The 228-residue stretch at 41 to 268 (NEVQISRLLS…KSRVRLSAGR (228 aa)) folds into the Radical SAM core domain. Positions 56, 60, and 63 each coordinate [4Fe-4S] cluster. 4 residues coordinate [2Fe-2S] cluster: cysteine 100, cysteine 131, cysteine 191, and arginine 263.

It belongs to the radical SAM superfamily. Biotin synthase family. Homodimer. The cofactor is [4Fe-4S] cluster. It depends on [2Fe-2S] cluster as a cofactor.

The enzyme catalyses (4R,5S)-dethiobiotin + (sulfur carrier)-SH + 2 reduced [2Fe-2S]-[ferredoxin] + 2 S-adenosyl-L-methionine = (sulfur carrier)-H + biotin + 2 5'-deoxyadenosine + 2 L-methionine + 2 oxidized [2Fe-2S]-[ferredoxin]. The protein operates within cofactor biosynthesis; biotin biosynthesis; biotin from 7,8-diaminononanoate: step 2/2. Catalyzes the conversion of dethiobiotin (DTB) to biotin by the insertion of a sulfur atom into dethiobiotin via a radical-based mechanism. This chain is Biotin synthase, found in Shewanella frigidimarina (strain NCIMB 400).